A 196-amino-acid polypeptide reads, in one-letter code: tRNA(Phe) 7-((3-amino-3-carboxypropyl)-4-demethylwyosine(37)-N(4))-methyltransferase (196 aa).

It belongs to the TYW3 family.

It carries out the reaction 4-demethyl-7-[(3S)-3-amino-3-carboxypropyl]wyosine(37) in tRNA(Phe) + S-adenosyl-L-methionine = 7-[(3S)-3-amino-3-carboxypropyl]wyosine(37) in tRNA(Phe) + S-adenosyl-L-homocysteine + H(+). S-adenosyl-L-methionine-dependent methyltransferase that acts as a component of the wyosine derivatives biosynthesis pathway. Probably methylates N-4 position of wybutosine-86 to produce wybutosine-72. The sequence is that of tRNA(Phe) 7-((3-amino-3-carboxypropyl)-4-demethylwyosine(37)-N(4))-methyltransferase from Archaeoglobus fulgidus (strain ATCC 49558 / DSM 4304 / JCM 9628 / NBRC 100126 / VC-16).